Here is a 393-residue protein sequence, read N- to C-terminus: Probable hydrolase sll0100 (393 aa).

Belongs to the peptidase M20 family.

This Synechocystis sp. (strain ATCC 27184 / PCC 6803 / Kazusa) protein is Probable hydrolase sll0100.